The following is a 1661-amino-acid chain: Beta/gamma crystallin domain-containing protein 2 (1661 aa).

Disordered stretches follow at residues 72–135 (EEET…PPCV), 148–168 (PGPR…SSRS), 242–268 (VPAG…GLGS), 297–321 (PASA…GRAP), 337–380 (STEL…THPG), 411–757 (EHVT…EEDE), 808–871 (LGPW…VSCS), and 883–903 (TKGP…PTSR). Basic and acidic residues predominate over residues 105 to 118 (PKEKRPEGRLKEAV). A compositionally biased stretch (polar residues) spans 337–353 (STELPLQTSQGQASVPS). A compositionally biased stretch (low complexity) spans 431-442 (PSPGGLSAPSSP). Polar residues-rich tracts occupy residues 507–519 (SSPT…QGSS), 628–644 (PKST…SSIQ), and 685–697 (SEGS…TQKE). The span at 706 to 719 (PAPSSSVDRVSPSP) shows a compositional bias: low complexity. Residues 731-750 (EASTESQLVSDPTEGKTCTE) are compositionally biased toward polar residues. Acidic residues predominate over residues 825–835 (EKEEEEEEEPE). The span at 841–851 (DDEKLQRRQEK) shows a compositional bias: basic and acidic residues. Beta/gamma crystallin 'Greek key' domains are found at residues 986 to 1023 (GKVI…RVVR), 1024 to 1067 (GCWV…RRVV), 1073 to 1113 (PEIS…TVSA), 1114 to 1156 (GLWL…KPMR), 1168 to 1213 (PRAV…RVLG), 1214 to 1256 (GCWV…RVIR), 1262 to 1302 (PAVV…HVLS), 1303 to 1345 (GVWV…QPVL), 1356 to 1393 (SKIQ…RVHG), 1394 to 1437 (GSWI…QKVS), 1443 to 1483 (PSIF…RIKG), and 1484 to 1525 (GIWV…YPIK). Residues 1569 to 1659 (WYYEDGLLKN…DRASQIWTIH (91 aa)) form the Ricin B-type lectin domain.

The protein belongs to the beta/gamma-crystallin family.

The chain is Beta/gamma crystallin domain-containing protein 2 from Homo sapiens (Human).